The following is a 173-amino-acid chain: Large ribosomal subunit protein uL10 (173 aa).

It belongs to the universal ribosomal protein uL10 family. As to quaternary structure, part of the ribosomal stalk of the 50S ribosomal subunit. The N-terminus interacts with L11 and the large rRNA to form the base of the stalk. The C-terminus forms an elongated spine to which L12 dimers bind in a sequential fashion forming a multimeric L10(L12)X complex.

In terms of biological role, forms part of the ribosomal stalk, playing a central role in the interaction of the ribosome with GTP-bound translation factors. The chain is Large ribosomal subunit protein uL10 (rplJ) from Synechocystis sp. (strain ATCC 27184 / PCC 6803 / Kazusa).